The following is a 448-amino-acid chain: N-succinylarginine dihydrolase (448 aa).

Residues 19-28 (AGLSSGNIAS), Asn110, and 137-138 (HR) contribute to the substrate site. Glu174 is a catalytic residue. Arg216 is a substrate binding site. Residue His252 is part of the active site. Substrate-binding residues include Asp254 and Asn366. The active-site Nucleophile is Cys372.

The protein belongs to the succinylarginine dihydrolase family. Homodimer.

The catalysed reaction is N(2)-succinyl-L-arginine + 2 H2O + 2 H(+) = N(2)-succinyl-L-ornithine + 2 NH4(+) + CO2. Its pathway is amino-acid degradation; L-arginine degradation via AST pathway; L-glutamate and succinate from L-arginine: step 2/5. Catalyzes the hydrolysis of N(2)-succinylarginine into N(2)-succinylornithine, ammonia and CO(2). The protein is N-succinylarginine dihydrolase of Legionella pneumophila (strain Lens).